The primary structure comprises 70 residues: Small ribosomal subunit protein bS18c (70 aa).

Belongs to the bacterial ribosomal protein bS18 family. In terms of assembly, part of the 30S ribosomal subunit.

Its subcellular location is the plastid. It is found in the chloroplast. The protein is Small ribosomal subunit protein bS18c of Pyropia yezoensis (Susabi-nori).